Reading from the N-terminus, the 72-residue chain is MSKDDVIEMQGTVLEALPNAMFEVELESGHKILAHISGKLRMNFIRILPGDKVTVELSPYDLTRGRITWRAK.

In terms of domain architecture, S1-like spans 1 to 72 (MSKDDVIEMQ…TRGRITWRAK (72 aa)).

The protein belongs to the IF-1 family. In terms of assembly, component of the 30S ribosomal translation pre-initiation complex which assembles on the 30S ribosome in the order IF-2 and IF-3, IF-1 and N-formylmethionyl-tRNA(fMet); mRNA recruitment can occur at any time during PIC assembly.

The protein localises to the cytoplasm. Functionally, one of the essential components for the initiation of protein synthesis. Stabilizes the binding of IF-2 and IF-3 on the 30S subunit to which N-formylmethionyl-tRNA(fMet) subsequently binds. Helps modulate mRNA selection, yielding the 30S pre-initiation complex (PIC). Upon addition of the 50S ribosomal subunit IF-1, IF-2 and IF-3 are released leaving the mature 70S translation initiation complex. The protein is Translation initiation factor IF-1 of Clostridium kluyveri (strain ATCC 8527 / DSM 555 / NBRC 12016 / NCIMB 10680 / K1).